A 39-amino-acid polypeptide reads, in one-letter code: Sarcotoxin-1C (39 aa).

An Arginine amide modification is found at Arg-39.

It belongs to the cecropin family.

It localises to the secreted. Functionally, sarcotoxins, which are potent bactericidal proteins, are produced in response to injury. They are cytotoxic to both Gram-positive and Gram-negative bacteria. The chain is Sarcotoxin-1C from Sarcophaga peregrina (Flesh fly).